The chain runs to 441 residues: Capsid protein (441 aa).

The interval 26–63 (DSKKKQPIYQNSSESEESETENKNFIYDFSSEEDFEEP) is disordered. The Nuclear localization signal signature appears at 77–79 (KRK). Residues 381–398 (CQCWLCHEEGHYANECPK) form a CCHC-type zinc finger.

The protein belongs to the caulimoviridae capsid protein family. In terms of assembly, interacts (via nuclear localization signal) with host importin alpha.

It is found in the virion. The protein resides in the host nucleus. Functionally, self assembles to form an icosahedral capsid, about 50 nm in diameter, nm, composed of 420 subunits of the viral capsid protein. The capsid encapsulates the genomic dsDNA. Following virus entry into host cell, provides nuclear import of the viral genome. Virus particles do not enter the nucleus, but dock at the nuclear membrane through the interaction with host importins. The sequence is that of Capsid protein from Soybean chlorotic mottle virus.